Consider the following 301-residue polypeptide: Ornithine carbamoyltransferase (301 aa).

Carbamoyl phosphate is bound by residues 46–49 (STRT), Q73, R97, and 124–127 (HPCQ). L-ornithine-binding positions include N154, D218, and 222–223 (SM). Carbamoyl phosphate is bound by residues 258-259 (CL) and R286.

This sequence belongs to the aspartate/ornithine carbamoyltransferase superfamily. OTCase family.

The protein resides in the cytoplasm. It catalyses the reaction carbamoyl phosphate + L-ornithine = L-citrulline + phosphate + H(+). The protein operates within amino-acid biosynthesis; L-arginine biosynthesis; L-arginine from L-ornithine and carbamoyl phosphate: step 1/3. Its function is as follows. Reversibly catalyzes the transfer of the carbamoyl group from carbamoyl phosphate (CP) to the N(epsilon) atom of ornithine (ORN) to produce L-citrulline. The protein is Ornithine carbamoyltransferase (argF) of Methanothermobacter thermautotrophicus (strain ATCC 29096 / DSM 1053 / JCM 10044 / NBRC 100330 / Delta H) (Methanobacterium thermoautotrophicum).